The chain runs to 152 residues: MFDVLTYLFEQYSDPAAFGDRSALTRQLNAVGFDDDDIGEALDWLDSVGEASVEPYLGADEGSGLRIYADSELEYLSPDVRGLIQFLEDNGALSPAQREMVIDRLLELDPEDLDIDTAKLLVLMVLWAQQAELPILLGEALLEAVHGEPTMQ.

It belongs to the Smg family.

The sequence is that of Protein Smg homolog from Chromobacterium violaceum (strain ATCC 12472 / DSM 30191 / JCM 1249 / CCUG 213 / NBRC 12614 / NCIMB 9131 / NCTC 9757 / MK).